Here is a 335-residue protein sequence, read N- to C-terminus: Ornithine carbamoyltransferase 2, catabolic (335 aa).

Carbamoyl phosphate contacts are provided by residues 62 to 65, Gln89, Arg113, and 140 to 143; these read STRT and HPTQ. L-ornithine is bound by residues Asn172, Asp236, and 240–241; that span reads SM. Carbamoyl phosphate-binding positions include 277–278 and Arg322; that span reads CL.

The protein belongs to the aspartate/ornithine carbamoyltransferase superfamily. OTCase family.

It localises to the cytoplasm. It carries out the reaction carbamoyl phosphate + L-ornithine = L-citrulline + phosphate + H(+). Its pathway is amino-acid degradation; L-arginine degradation via ADI pathway; carbamoyl phosphate from L-arginine: step 2/2. Reversibly catalyzes the transfer of the carbamoyl group from carbamoyl phosphate (CP) to the N(epsilon) atom of ornithine (ORN) to produce L-citrulline. The polypeptide is Ornithine carbamoyltransferase 2, catabolic (arcB2) (Staphylococcus epidermidis (strain ATCC 12228 / FDA PCI 1200)).